The following is a 587-amino-acid chain: MSTSVAGVLAVALLVAALWVTYRPFGDYMYRVFAAKRHLRVERAIYRLTGVNPDTGQRWPVYARSVLAFSLVSVLLLYLLQRVQEHLPLNLGFGAVGPALAWNTAVSFMTNTNWQAYSGESTMGHTVQMTGLAVQNFVSAAVGIAVAIAVVRGFARRRAPVAVGGPGGPNGPGGPGGPNGPGAGSRDDVIGTGDELGNFWVDLTRTVIRILLPVCVIAAIVLVAGGAIQNLHGNRVVSTLAGGHQTITGGPVASQEAIKEFGTNGGGFYNVNSAHPFENPTSWTNLVEIFLLLAIAFSLPRTFGRMVGDRRQGLAIVAVMAVLALGSFAVNAAFQTAHHGTVPVAVGAATEGTDTRFGVPNSALFASATTLTSTGAVNSFHDSYTSLGGATLLFNMMLGEVAPGGTGSGLYGMLVLAVVTVFVAGLMIGRTPEYLGKKIGSREIKFASLYFLATPAIALLGTGVAMGLPGERASMLNSGAHGLSEVLYAFTSAANNNGSAFGGISVNTTWYNTALGLAMLFGRLLPMLLVLGMAGSFARQHPVPATAGTLPTHRPQFAGMLGAIALIIVALTFFPALALGPLAEGIH.

4 consecutive transmembrane segments (helical) span residues 1–21 (MSTS…LWVT), 60–80 (PVYA…LYLL), 89–109 (LNLG…VSFM), and 131–151 (GLAV…IAVV). The disordered stretch occupies residues 162 to 188 (AVGGPGGPNGPGGPGGPNGPGAGSRDD). Gly residues predominate over residues 164 to 183 (GGPGGPNGPGGPGGPNGPGA). Helical transmembrane passes span 208 to 228 (IRIL…GGAI), 280 to 300 (PTSW…FSLP), 314 to 334 (LAIV…NAAF), 409 to 429 (GLYG…LMIG), 449 to 469 (LYFL…MGLP), 514 to 534 (ALGL…LGMA), and 557 to 577 (FAGM…FPAL).

It belongs to the KdpA family. In terms of assembly, the system is composed of three essential subunits: KdpA, KdpB and KdpC.

Its subcellular location is the cell membrane. Part of the high-affinity ATP-driven potassium transport (or Kdp) system, which catalyzes the hydrolysis of ATP coupled with the electrogenic transport of potassium into the cytoplasm. This subunit binds the extracellular potassium ions and delivers the ions to the membrane domain of KdpB through an intramembrane tunnel. The protein is Potassium-transporting ATPase potassium-binding subunit of Frankia alni (strain DSM 45986 / CECT 9034 / ACN14a).